The sequence spans 388 residues: Na(+)/H(+) antiporter NhaA (388 aa).

Topologically, residues 1-11 (MKHLHRFFSSD) are cytoplasmic. A helical transmembrane segment spans residues 12–31 (ASGGIILIIAAILAMMMANS). Topologically, residues 32-58 (GATSGWYHDFLETPVQLRVGSLEINKN) are periplasmic. A helical transmembrane segment spans residues 59–80 (MLLWINDALMAVFFLLVGLEVK). Over 81–96 (RELMQGSLASLRQAAF) the chain is Cytoplasmic. The chain crosses the membrane as a helical span at residues 97-116 (PVIAAIGGMIVPALLYLAFN). At 117 to 122 (YADPIT) the chain is on the periplasmic side. Residues 123–130 (REGWAIPA) form a helical membrane-spanning segment. Topologically, residues 131 to 154 (ATDIAFALGVLALLGSRVPLALKI) are cytoplasmic. The helical transmembrane segment at 155 to 176 (FLMALAIIDDLGAIIIIALFYT) threads the bilayer. The Periplasmic portion of the chain corresponds to 177–180 (NDLS). Residues 181-200 (MASLGVAAVAIAVLAVLNLC) traverse the membrane as a helical segment. Over 201–204 (GVRR) the chain is Cytoplasmic. The helical transmembrane segment at 205 to 222 (TGVYILVGVVLWTAVLKS) threads the bilayer. Glycine 223 is a topological domain (periplasmic). A helical transmembrane segment spans residues 224-236 (VHATLAGVIVGFF). At 237–253 (IPLKEKHGRSPAKRLEH) the chain is on the cytoplasmic side. Residues 254-272 (VLHPWVAYLILPLFAFANA) traverse the membrane as a helical segment. Topologically, residues 273 to 286 (GVSLQGVTLDGLTS) are periplasmic. Residues 287–310 (ILPLGIIAGLLIGKPLGISLFCWL) form a helical membrane-spanning segment. The Cytoplasmic portion of the chain corresponds to 311 to 339 (ALRLKLAHLPEGTTYQQIMAVGILCGIGF). A helical transmembrane segment spans residues 340–350 (TMSIFIASLAF). At 351 to 357 (GSVDPEL) the chain is on the periplasmic side. Residues 358–380 (INWAKLGILVGSISSAVIGYSWL) form a helical membrane-spanning segment. Residues 381 to 388 (RVRLRPSV) are Cytoplasmic-facing.

The protein belongs to the NhaA Na(+)/H(+) (TC 2.A.33) antiporter family.

Its subcellular location is the cell inner membrane. It carries out the reaction Na(+)(in) + 2 H(+)(out) = Na(+)(out) + 2 H(+)(in). In terms of biological role, na(+)/H(+) antiporter that extrudes sodium in exchange for external protons. This is Na(+)/H(+) antiporter NhaA from Shigella boydii serotype 4 (strain Sb227).